We begin with the raw amino-acid sequence, 421 residues long: Synaptotagmin-1 (421 aa).

Residues 1–40 (MVSESHHEALAAPPATTVAAAPPSNVTEPASPGGGGGKED) are disordered. At 1-60 (MVSESHHEALAAPPATTVAAAPPSNVTEPASPGGGGGKEDAFSKLKEKFMNELNKIPLPP) the chain is on the vesicular side. The span at 10–23 (LAAPPATTVAAAPP) shows a compositional bias: low complexity. The N-linked (GlcNAc...) asparagine glycan is linked to Asn-25. A helical transmembrane segment spans residues 61–81 (WALIAIAIVAVLLILTCCFCL). Residues Cys-77, Cys-78, Cys-80, Cys-82, and Cys-85 are each lipidated (S-palmitoyl cysteine). Over 82–421 (CKKCLFKKKN…EVDAMLAVKK (340 aa)) the chain is Cytoplasmic. The disordered stretch occupies residues 94-139 (KGKEKGGKNAINMKDVKDLGKTMKDQDDDAETGLTDGEEKEEPKEV). Basic and acidic residues predominate over residues 107-118 (KDVKDLGKTMKD). The segment covering 119–133 (QDDDAETGLTDGEEK) has biased composition (acidic residues). A phospholipid binding region spans residues 135 to 381 (EPKEVEKLGK…AIGKVFVGYN (247 aa)). C2 domains follow at residues 141 to 260 (KLGK…EEWR) and 272 to 405 (KLGD…AQWH). Residues Leu-171, Asp-172, Asp-178, Asp-230, Phe-231, Asp-232, Ser-235, Lys-236, Asp-238, Asp-303, Asp-309, Asp-363, Asp-365, and Asp-371 each contribute to the Ca(2+) site.

The protein belongs to the synaptotagmin family. As to quaternary structure, homotetramer. Ca(2+) is required as a cofactor.

The protein localises to the cytoplasmic vesicle. It localises to the secretory vesicle membrane. The protein resides in the secretory vesicle. Its subcellular location is the synaptic vesicle membrane. It is found in the chromaffin granule membrane. The protein localises to the cytoplasm. Calcium sensor that participates in triggering neurotransmitter release at the synapse. May have a regulatory role in the membrane interactions during trafficking of synaptic vesicles at the active zone of the synapse. It binds acidic phospholipids with a specificity that requires the presence of both an acidic head group and a diacyl backbone. May play a role in dendrite formation by melanocytes. May play a role in regulating the secretion of hormones relevant to the reproduction and egg-laying of female geese. The polypeptide is Synaptotagmin-1 (Anser cygnoides (Swan goose)).